Here is a 583-residue protein sequence, read N- to C-terminus: Propane 2-monooxygenase operon transcriptional activator MimR (583 aa).

The region spanning 320 to 513 (LAGQSSSFRR…LRHVLTETVR (194 aa)) is the Sigma-54 factor interaction domain. ATP contacts are provided by residues 349–356 (ERGSGRTY) and 395–404 (SADFAVIVSD).

Acts as a transcriptional activator of the mimABCD operon encoding the propane 2-monooxygenase complex. This chain is Propane 2-monooxygenase operon transcriptional activator MimR, found in Mycolicibacterium smegmatis (strain ATCC 700084 / mc(2)155) (Mycobacterium smegmatis).